A 513-amino-acid polypeptide reads, in one-letter code: Probable DNA ligase (513 aa).

Glu-215 provides a ligand contact to ATP. Lys-217 functions as the N6-AMP-lysine intermediate in the catalytic mechanism. Arg-222, Arg-237, Glu-266, Phe-306, Arg-378, and Lys-384 together coordinate ATP.

It belongs to the ATP-dependent DNA ligase family. The cofactor is Mg(2+).

It carries out the reaction ATP + (deoxyribonucleotide)n-3'-hydroxyl + 5'-phospho-(deoxyribonucleotide)m = (deoxyribonucleotide)n+m + AMP + diphosphate.. In terms of biological role, DNA ligase that seals nicks in double-stranded DNA during DNA replication, DNA recombination and DNA repair. This chain is Probable DNA ligase, found in Mycobacterium marinum (strain ATCC BAA-535 / M).